The sequence spans 505 residues: Cytochrome c oxidase subunit 1 (505 aa).

A helical transmembrane segment spans residues 14 to 34 (LLYLVFAFFGGLLGTSLSMLI). The Ca(2+) site is built by glutamate 37 and glycine 42. Transmembrane regions (helical) follow at residues 55–75 (VIIT…ALFG), 98–118 (NISF…TLVE), 143–163 (AILS…NMLV), 180–200 (LFVW…PVLA), 229–249 (LFWF…FGIV), and 261–281 (VFGL…GFIV). Histidine 60 lines the Fe(II)-heme a pocket. Cu cation contacts are provided by histidine 235 and tyrosine 239. Positions 235–239 (HPEVY) form a cross-link, 1'-histidyl-3'-tyrosine (His-Tyr). Tyrosine 239 provides a ligand contact to O2. Cu cation is bound by residues histidine 284 and histidine 285. A run of 2 helical transmembrane segments spans residues 302-322 (ATMI…ATIY) and 332-352 (MWFA…GVVL). Residues histidine 362 and aspartate 363 each coordinate Mg(2+). Histidine 370 serves as a coordination point for heme a3. Histidine 372 contacts Fe(II)-heme a. The next 3 membrane-spanning stretches (helical) occupy residues 374 to 394 (VLSM…GNLI), 408 to 428 (FWLL…LGLA), and 446 to 466 (AVSS…ATTF).

This sequence belongs to the heme-copper respiratory oxidase family. In terms of assembly, component of the cytochrome c oxidase (complex IV, CIV), a multisubunit enzyme composed of a catalytic core of 3 subunits and several supernumerary subunits. The complex exists as a monomer or a dimer and forms supercomplexes (SCs) in the inner mitochondrial membrane with ubiquinol-cytochrome c oxidoreductase (cytochrome b-c1 complex, complex III, CIII). Heme serves as cofactor. The cofactor is Cu cation.

It localises to the mitochondrion inner membrane. It carries out the reaction 4 Fe(II)-[cytochrome c] + O2 + 8 H(+)(in) = 4 Fe(III)-[cytochrome c] + 2 H2O + 4 H(+)(out). It functions in the pathway energy metabolism; oxidative phosphorylation. Functionally, component of the cytochrome c oxidase, the last enzyme in the mitochondrial electron transport chain which drives oxidative phosphorylation. The respiratory chain contains 3 multisubunit complexes succinate dehydrogenase (complex II, CII), ubiquinol-cytochrome c oxidoreductase (cytochrome b-c1 complex, complex III, CIII) and cytochrome c oxidase (complex IV, CIV), that cooperate to transfer electrons derived from NADH and succinate to molecular oxygen, creating an electrochemical gradient over the inner membrane that drives transmembrane transport and the ATP synthase. Cytochrome c oxidase is the component of the respiratory chain that catalyzes the reduction of oxygen to water. Electrons originating from reduced cytochrome c in the intermembrane space (IMS) are transferred via the dinuclear copper A center (CU(A)) of subunit 2 and heme A of subunit 1 to the active site in subunit 1, a binuclear center (BNC) formed by heme A3 and copper B (CU(B)). The BNC reduces molecular oxygen to 2 water molecules using 4 electrons from cytochrome c in the IMS and 4 protons from the mitochondrial matrix. The sequence is that of Cytochrome c oxidase subunit 1 (COX1) from Chlamydomonas reinhardtii (Chlamydomonas smithii).